We begin with the raw amino-acid sequence, 239 residues long: 1-(5-phosphoribosyl)-5-[(5-phosphoribosylamino)methylideneamino] imidazole-4-carboxamide isomerase (239 aa).

The Proton acceptor role is filled by Asp8. The Proton donor role is filled by Asp129.

It belongs to the HisA/HisF family.

It localises to the cytoplasm. It catalyses the reaction 1-(5-phospho-beta-D-ribosyl)-5-[(5-phospho-beta-D-ribosylamino)methylideneamino]imidazole-4-carboxamide = 5-[(5-phospho-1-deoxy-D-ribulos-1-ylimino)methylamino]-1-(5-phospho-beta-D-ribosyl)imidazole-4-carboxamide. Its pathway is amino-acid biosynthesis; L-histidine biosynthesis; L-histidine from 5-phospho-alpha-D-ribose 1-diphosphate: step 4/9. The protein is 1-(5-phosphoribosyl)-5-[(5-phosphoribosylamino)methylideneamino] imidazole-4-carboxamide isomerase of Pelagibacter ubique (strain HTCC1062).